A 297-amino-acid chain; its full sequence is MATNLRGVMAALLTPFDQQQALDKASLRRLVQFNIQQGIDGLYVGGSTGEAFVQSLSEREQVLEIVAEEAKGKIKLIAHVGCVSTAESQQLASSAKRYGFDAVSAVTPFYYPFSFEEHCDHYRAIIDSADGLPMVVYNIPALSGVKLTLDQINTLVTLPGVGALKQTSGDLYQMEQIRREHPDLVLYNGYDEIFASGLLAGADGGIGSTYNIMGWRYQGIVKALKEGDIQTAQKLQTECNKVIDLLIKTGVFRGLKTVLHYMDVVSVPLCRKPFGPVDEKYLPELKVLAQQLMQERG.

Aceneuramate contacts are provided by Ser-47 and Thr-48. The Proton donor role is filled by Tyr-137. Lys-165 acts as the Schiff-base intermediate with substrate in catalysis. Residues Thr-167, Gly-189, Asp-191, Glu-192, and Ser-208 each contribute to the aceneuramate site.

Belongs to the DapA family. NanA subfamily. In terms of assembly, homotetramer.

The protein resides in the cytoplasm. The enzyme catalyses aceneuramate = aldehydo-N-acetyl-D-mannosamine + pyruvate. The protein operates within amino-sugar metabolism; N-acetylneuraminate degradation; D-fructose 6-phosphate from N-acetylneuraminate: step 1/5. Functionally, catalyzes the reversible aldol cleavage of N-acetylneuraminic acid (sialic acid; Neu5Ac) to form pyruvate and N-acetylmannosamine (ManNAc) via a Schiff base intermediate. The sequence is that of N-acetylneuraminate lyase from Escherichia fergusonii (strain ATCC 35469 / DSM 13698 / CCUG 18766 / IAM 14443 / JCM 21226 / LMG 7866 / NBRC 102419 / NCTC 12128 / CDC 0568-73).